The primary structure comprises 571 residues: uncharacterized protein (571 aa).

The next 5 membrane-spanning stretches (helical) occupy residues 10–29, 36–55, 65–87, 96–118, and 166–188; these read VRLHPELALFAAIVFGHFIG, VSLGTVVGTLIAGMILGLLF, WAFFDLFLFAVGYSAGPQFFASL, ALAVVVSCTGLAAAIAMVALFRF, and ATTYIFGEVGLILFVTVVAPRLL. An RCK C-terminal domain is found at 294 to 378; sequence TEVDDQELLS…IATAARNLGF (85 aa). 6 consecutive transmembrane segments (helical) span residues 388-406, 411-433, 446-465, 480-502, 509-531, and 546-568; these read LVYLAGGVVVGILFGLLQV, VPLGLGTSGGVLVVGLVAGWLYS, LRLLSDVGLIVFIAAIGLAA, LFAKLVGAGVVVTLAGPIAGLLL, LPPVALLPGIAGAQTTVATLNAL, and VPFAVSNVLITLWGPVIVACAVA.

It belongs to the AAE transporter (TC 2.A.81) family.

The protein localises to the cell membrane. This is an uncharacterized protein from Bordetella parapertussis (strain 12822 / ATCC BAA-587 / NCTC 13253).